A 500-amino-acid polypeptide reads, in one-letter code: L-arabinose isomerase (500 aa).

E306, E333, H349, and H448 together coordinate Mn(2+).

The protein belongs to the arabinose isomerase family. Mn(2+) serves as cofactor.

The enzyme catalyses beta-L-arabinopyranose = L-ribulose. It functions in the pathway carbohydrate degradation; L-arabinose degradation via L-ribulose; D-xylulose 5-phosphate from L-arabinose (bacterial route): step 1/3. Functionally, catalyzes the conversion of L-arabinose to L-ribulose. This Cellvibrio japonicus (strain Ueda107) (Pseudomonas fluorescens subsp. cellulosa) protein is L-arabinose isomerase.